Consider the following 29-residue polypeptide: Cytochrome b6-f complex subunit 8 (29 aa).

A helical transmembrane segment spans residues 3-23 (IISIGWVSLMVVFTFSISLVV).

This sequence belongs to the PetN family. As to quaternary structure, the 4 large subunits of the cytochrome b6-f complex are cytochrome b6, subunit IV (17 kDa polypeptide, PetD), cytochrome f and the Rieske protein, while the 4 small subunits are PetG, PetL, PetM and PetN. The complex functions as a dimer.

The protein resides in the plastid. Its subcellular location is the chloroplast thylakoid membrane. Its function is as follows. Component of the cytochrome b6-f complex, which mediates electron transfer between photosystem II (PSII) and photosystem I (PSI), cyclic electron flow around PSI, and state transitions. The protein is Cytochrome b6-f complex subunit 8 of Staurastrum punctulatum (Green alga).